Reading from the N-terminus, the 176-residue chain is Disulfide bond formation protein B (176 aa).

Residues 1-11 (MLQLTTYRNLQ) lie on the Cytoplasmic side of the membrane. Residues 12 to 28 (VFLVIMTAIGMSFALFF) form a helical membrane-spanning segment. The Periplasmic segment spans residues 29–46 (LQRYMGFSPCPLCIFQRI). Residues cysteine 38 and cysteine 41 are joined by a disulfide bond. The chain crosses the membrane as a helical span at residues 47–63 (GLMIMGGFALIAALFHP). Over 64–70 (KSMVIRL) the chain is Cytoplasmic. The chain crosses the membrane as a helical span at residues 71-88 (LLWLGSLAGIGWAAIVAG). Topologically, residues 89 to 145 (RHVWLQHLPADQVPSCGPGLDYWLDTLPMQQVLKEVFAGSGECASIDWTFLGLSIPE) are periplasmic. A disulfide bridge links cysteine 104 with cysteine 131. A helical transmembrane segment spans residues 146–164 (QSLILFSILILTHLLILWR). Residues 165 to 176 (IVRPATPKPLAR) lie on the Cytoplasmic side of the membrane.

Belongs to the DsbB family.

It localises to the cell inner membrane. Required for disulfide bond formation in some periplasmic proteins. Acts by oxidizing the DsbA protein. This is Disulfide bond formation protein B from Psychrobacter cryohalolentis (strain ATCC BAA-1226 / DSM 17306 / VKM B-2378 / K5).